Here is a 394-residue protein sequence, read N- to C-terminus: Elongation factor Tu (394 aa).

The tr-type G domain maps to lysine 10–glutamate 204. A G1 region spans residues glycine 19–threonine 26. Glycine 19 to threonine 26 lines the GTP pocket. Threonine 26 is a Mg(2+) binding site. The tract at residues glycine 60 to asparagine 64 is G2. A G3 region spans residues aspartate 81–glycine 84. GTP contacts are provided by residues aspartate 81 to histidine 85 and asparagine 136 to aspartate 139. The segment at asparagine 136–aspartate 139 is G4. The segment at serine 174–leucine 176 is G5.

Belongs to the TRAFAC class translation factor GTPase superfamily. Classic translation factor GTPase family. EF-Tu/EF-1A subfamily. Monomer.

It localises to the cytoplasm. The catalysed reaction is GTP + H2O = GDP + phosphate + H(+). GTP hydrolase that promotes the GTP-dependent binding of aminoacyl-tRNA to the A-site of ribosomes during protein biosynthesis. The polypeptide is Elongation factor Tu (Chlamydia caviae (strain ATCC VR-813 / DSM 19441 / 03DC25 / GPIC) (Chlamydophila caviae)).